Here is a 177-residue protein sequence, read N- to C-terminus: Apoptosis regulatory protein Siva (177 aa).

Residue Tyr-34 is modified to Phosphotyrosine; by ABL2. Residues 36-55 (REVFERTKQLLFQGAQAYRD) are interaction with BCL2L1 isoform Bcl-x(L) and inhibition of BCL2L1 anti-apoptotic activity.

Binds through its N-terminal region to the C-terminus of CD27 and to PXMP2/PMP22. Binds to the C-terminus of TNFRSF18/GITR. Binds to BCL2L1/BCLX isoform Bcl-x(L) but not to BAX. Zn(2+) serves as cofactor. In terms of tissue distribution, in post-ischemic kidney, found in cells lining the S3 segment of proximal tubules at 12 hours and 1 day post-ischemia. At five and seven days post-ischemia, found in epithelial cells of papillary proliferations in regenerating tubules.

It localises to the cytoplasm. It is found in the nucleus. Functionally, induces CD27-mediated apoptosis. Inhibits BCL2L1 isoform Bcl-x(L) anti-apoptotic activity. Inhibits activation of NF-kappa-B and promotes T-cell receptor-mediated apoptosis. This is Apoptosis regulatory protein Siva (Siva1) from Rattus norvegicus (Rat).